A 102-amino-acid chain; its full sequence is MAKKCMVNREIKRIKTVKKFAAKREELKEIIRKVATYSDEERAAAQEKLQKLPRNASPSRVQRRCRITGRPHAVYRKFGLSRIKLRELTMRGEVPGVRKASW.

The protein belongs to the universal ribosomal protein uS14 family. Part of the 30S ribosomal subunit. Contacts proteins S3 and S10.

Binds 16S rRNA, required for the assembly of 30S particles and may also be responsible for determining the conformation of the 16S rRNA at the A site. This Dichelobacter nodosus (strain VCS1703A) protein is Small ribosomal subunit protein uS14.